Consider the following 174-residue polypeptide: Small heat shock protein OV25-1 (174 aa).

The region spanning 50–161 is the sHSP domain; it reads LNECNIGNTL…ASRNIPIRAS (112 aa). The interval 153–174 is disordered; the sequence is SRNIPIRASPKEPEAKQKTKKQ. Positions 161–174 are enriched in basic and acidic residues; it reads SPKEPEAKQKTKKQ.

Belongs to the small heat shock protein (HSP20) family.

The chain is Small heat shock protein OV25-1 (OV25-1) from Onchocerca volvulus.